The following is a 54-amino-acid chain: UPF0391 membrane protein Tbd_2238 (54 aa).

The next 2 membrane-spanning stretches (helical) occupy residues 5-25 and 28-48; these read ALVFFIIAIVAAVFGFSGIAA and VGIAKILFVVFLIMAIATFVV.

The protein belongs to the UPF0391 family.

It is found in the cell membrane. This chain is UPF0391 membrane protein Tbd_2238, found in Thiobacillus denitrificans (strain ATCC 25259 / T1).